Here is a 129-residue protein sequence, read N- to C-terminus: uncharacterized protein (129 aa).

The helical transmembrane segment at 33-50 (MGGNVMWFIALLFALLIA) threads the bilayer.

The protein localises to the membrane. This is an uncharacterized protein from Saccharomyces cerevisiae (strain ATCC 204508 / S288c) (Baker's yeast).